A 350-amino-acid chain; its full sequence is S-adenosylmethionine:tRNA ribosyltransferase-isomerase (350 aa).

The protein belongs to the QueA family. In terms of assembly, monomer.

It localises to the cytoplasm. It catalyses the reaction 7-aminomethyl-7-carbaguanosine(34) in tRNA + S-adenosyl-L-methionine = epoxyqueuosine(34) in tRNA + adenine + L-methionine + 2 H(+). It participates in tRNA modification; tRNA-queuosine biosynthesis. Its function is as follows. Transfers and isomerizes the ribose moiety from AdoMet to the 7-aminomethyl group of 7-deazaguanine (preQ1-tRNA) to give epoxyqueuosine (oQ-tRNA). The polypeptide is S-adenosylmethionine:tRNA ribosyltransferase-isomerase (Aliivibrio fischeri (strain ATCC 700601 / ES114) (Vibrio fischeri)).